The sequence spans 249 residues: ATP synthase subunit a (249 aa).

The next 6 membrane-spanning stretches (helical) occupy residues 30-50 (QSPL…YVGM), 86-106 (FFPF…LGLL), 115-135 (HIAV…LASI), 146-166 (FLPA…EIIS), 191-211 (VFAG…VLAI), and 218-238 (IALT…FAIL).

The protein belongs to the ATPase A chain family. In terms of assembly, F-type ATPases have 2 components, CF(1) - the catalytic core - and CF(0) - the membrane proton channel. CF(1) has five subunits: alpha(3), beta(3), gamma(1), delta(1), epsilon(1). CF(0) has three main subunits: a(1), b(2) and c(9-12). The alpha and beta chains form an alternating ring which encloses part of the gamma chain. CF(1) is attached to CF(0) by a central stalk formed by the gamma and epsilon chains, while a peripheral stalk is formed by the delta and b chains.

The protein localises to the cell inner membrane. Key component of the proton channel; it plays a direct role in the translocation of protons across the membrane. In Gluconobacter oxydans (strain 621H) (Gluconobacter suboxydans), this protein is ATP synthase subunit a.